A 255-amino-acid chain; its full sequence is Indole-3-glycerol phosphate synthase (255 aa).

The protein belongs to the TrpC family.

The catalysed reaction is 1-(2-carboxyphenylamino)-1-deoxy-D-ribulose 5-phosphate + H(+) = (1S,2R)-1-C-(indol-3-yl)glycerol 3-phosphate + CO2 + H2O. The protein operates within amino-acid biosynthesis; L-tryptophan biosynthesis; L-tryptophan from chorismate: step 4/5. The polypeptide is Indole-3-glycerol phosphate synthase (Streptococcus thermophilus (strain CNRZ 1066)).